A 331-amino-acid chain; its full sequence is Calcium-binding and coiled-coil domain-containing protein 2 (331 aa).

The CLIR signature appears at 128–131 (IMVV). Residues 132–309 (INKEKVEEME…EKASWEKEKA (178 aa)) are a coiled coil. Residues 189–310 (KASWEKEKAS…KASWEKEKAP (122 aa)) are disordered. The LIR-like motif lies at 190–193 (ASWE). An interaction with LGALS8 region spans residues 292 to 302 (KEKASWEEEKA).

Belongs to the CALCOCO family. Dimer. Part of a complex consisting of CALCOCO2, TAX1BP1 and MYO6. Interacts with MYO6. Interacts with GEMIN4. Interacts with ATG8 family members MAP1LC3A, MAP1LC3B, GABARAP, GABARAPL1 and GABARAPL2. Interacts with ATG8 family member MAP1LC3C. Interacts with LGALS8. Interacts with TOM1; the interaction is indirect and is mediated by MYO6, which acts as a bridge between TOM1 and CALCOCO2. Interacts with AZI2.

It localises to the cytoplasm. It is found in the perinuclear region. Its subcellular location is the cytoskeleton. The protein localises to the cytoplasmic vesicle. The protein resides in the autophagosome membrane. Xenophagy-specific receptor required for autophagy-mediated intracellular bacteria degradation. Acts as an effector protein of galectin-sensed membrane damage that restricts the proliferation of infecting pathogens upon entry into the cytosol by targeting LGALS8-associated bacteria for autophagy. Initially orchestrates bacteria targeting to autophagosomes and subsequently ensures pathogen degradation by regulating pathogen-containing autophagosome maturation. Bacteria targeting to autophagosomes relies on its interaction with MAP1LC3A, MAP1LC3B and/or GABARAPL2, whereas regulation of pathogen-containing autophagosome maturation requires the interaction with MAP3LC3C. May play a role in ruffle formation and actin cytoskeleton organization and seems to negatively regulate constitutive secretion. The sequence is that of Calcium-binding and coiled-coil domain-containing protein 2 from Mus musculus (Mouse).